The chain runs to 430 residues: Centrosomal protein CEP57L1 (430 aa).

Ser45 carries the phosphoserine modification. A coiled-coil region spans residues 46–213 (PNNQALVSAL…HQRRLFQDRA (168 aa)). Disordered regions lie at residues 248–290 (CLKR…GEPF) and 362–430 (RKLQ…KWEQ). 3 stretches are compositionally biased toward basic and acidic residues: residues 249 to 272 (LKRE…ERPP), 362 to 372 (RKLQEKVENSR), and 421 to 430 (LRRDDVKWEQ). The stretch at 290–377 (FSICDNLSEL…VENSRINESS (88 aa)) forms a coiled coil.

Belongs to the translokin family.

Its subcellular location is the cytoplasm. It is found in the cytoskeleton. The protein resides in the microtubule organizing center. The protein localises to the centrosome. Functionally, centrosomal protein which may be required for microtubule attachment to centrosomes. This is Centrosomal protein CEP57L1 (Cep57l1) from Rattus norvegicus (Rat).